The following is a 156-amino-acid chain: Cell division protein SepF (156 aa).

Positions 23–36 are enriched in basic and acidic residues; sequence SYEKEQTDMKKQQD. The disordered stretch occupies residues 23–49; it reads SYEKEQTDMKKQQDPPEQQDVTFPKAQ.

This sequence belongs to the SepF family. In terms of assembly, homodimer. Interacts with FtsZ.

Its subcellular location is the cytoplasm. Cell division protein that is part of the divisome complex and is recruited early to the Z-ring. Probably stimulates Z-ring formation, perhaps through the cross-linking of FtsZ protofilaments. Its function overlaps with FtsA. In Bacillus anthracis (strain CDC 684 / NRRL 3495), this protein is Cell division protein SepF.